A 213-amino-acid chain; its full sequence is Octanoyltransferase (213 aa).

Positions 27 to 209 (AATPDEVWLC…RLLAAMPEPA (183 aa)) constitute a BPL/LPL catalytic domain. Substrate-binding positions include 66–73 (RGGQVTYH), 140–142 (ALG), and 153–155 (GVA). Residue Cys171 is the Acyl-thioester intermediate of the active site.

This sequence belongs to the LipB family.

The protein localises to the cytoplasm. The enzyme catalyses octanoyl-[ACP] + L-lysyl-[protein] = N(6)-octanoyl-L-lysyl-[protein] + holo-[ACP] + H(+). Its pathway is protein modification; protein lipoylation via endogenous pathway; protein N(6)-(lipoyl)lysine from octanoyl-[acyl-carrier-protein]: step 1/2. In terms of biological role, catalyzes the transfer of endogenously produced octanoic acid from octanoyl-acyl-carrier-protein onto the lipoyl domains of lipoate-dependent enzymes. Lipoyl-ACP can also act as a substrate although octanoyl-ACP is likely to be the physiological substrate. The sequence is that of Octanoyltransferase from Bordetella petrii (strain ATCC BAA-461 / DSM 12804 / CCUG 43448).